A 45-amino-acid chain; its full sequence is Photosystem II reaction center protein K (45 aa).

The propeptide occupies 1–8 (MDVNFLLS). Residues 20–40 (IVDVMPAIPVFFLLLAFVWQA) traverse the membrane as a helical segment.

The protein belongs to the PsbK family. As to quaternary structure, PSII is composed of 1 copy each of membrane proteins PsbA, PsbB, PsbC, PsbD, PsbE, PsbF, PsbH, PsbI, PsbJ, PsbK, PsbL, PsbM, PsbT, PsbX, PsbY, PsbZ, Psb30/Ycf12, at least 3 peripheral proteins of the oxygen-evolving complex and a large number of cofactors. It forms dimeric complexes.

It is found in the plastid. The protein localises to the chloroplast thylakoid membrane. One of the components of the core complex of photosystem II (PSII). PSII is a light-driven water:plastoquinone oxidoreductase that uses light energy to abstract electrons from H(2)O, generating O(2) and a proton gradient subsequently used for ATP formation. It consists of a core antenna complex that captures photons, and an electron transfer chain that converts photonic excitation into a charge separation. The sequence is that of Photosystem II reaction center protein K from Emiliania huxleyi (Coccolithophore).